Consider the following 257-residue polypeptide: MVLIRVLANLLILQLSYAQKSSELVVGGDECNINEHRFLVLVYTDGIQCGGTLINKEWMLTAAHCDGKKMKLQFGLHSKNVPNKDKQTRVPKKKYFFPCSKNFTKWDKDIMLIRLNHPVNNSTHIAPLSLPSKPPSQDTVCNIMGWGTISPTKEIYPDVPHCANINIVDHAVCRAFYPGLLEKSKTLCAGILEGGKDICQGDSGGPLICNGQIQGIVSVGGNPCAEPRVPAIYTKVFDHLDWIKSIIAGNTAATCPL.

The signal sequence occupies residues 1-18 (MVLIRVLANLLILQLSYA). Residues 19 to 24 (QKSSEL) constitute a propeptide that is removed on maturation. In terms of domain architecture, Peptidase S1 spans 25–248 (VVGGDECNIN…HLDWIKSIIA (224 aa)). 5 disulfide bridges follow: cysteine 31/cysteine 162, cysteine 49/cysteine 65, cysteine 141/cysteine 209, cysteine 173/cysteine 188, and cysteine 199/cysteine 224. Residue histidine 64 is the Charge relay system of the active site. The N-linked (GlcNAc...) asparagine glycan is linked to asparagine 102. The Charge relay system role is filled by aspartate 109. N-linked (GlcNAc...) asparagine glycans are attached at residues asparagine 120 and asparagine 121. Catalysis depends on serine 203, which acts as the Charge relay system.

The protein belongs to the peptidase S1 family. Snake venom subfamily. Monomer. As to expression, expressed by the venom gland.

The protein localises to the secreted. Functionally, snake venom serine protease that may act in the hemostasis system of the prey. The chain is Snake venom serine protease KN9 from Trimeresurus stejnegeri (Chinese green tree viper).